Here is a 333-residue protein sequence, read N- to C-terminus: Catabolite control protein A (333 aa).

Residues 7-61 (ITIYDVAREAGVSMATVSRVVNGNKNVKENTRKKVLEVIDRLDYRPNAVARGLAS) enclose the HTH lacI-type domain. Positions 9-28 (IYDVAREAGVSMATVSRVVN) form a DNA-binding region, H-T-H motif.

Functionally, global transcriptional regulator of carbon catabolite repression (CCR) and carbon catabolite activation (CCA), which ensures optimal energy usage under diverse conditions. The protein is Catabolite control protein A (ccpA) of Streptococcus mutans serotype c (strain ATCC 700610 / UA159).